Consider the following 164-residue polypeptide: Peptide deformylase (164 aa).

Residues Cys87 and His129 each contribute to the Fe cation site. The active site involves Glu130. Fe cation is bound at residue His133.

The protein belongs to the polypeptide deformylase family. It depends on Fe(2+) as a cofactor.

It catalyses the reaction N-terminal N-formyl-L-methionyl-[peptide] + H2O = N-terminal L-methionyl-[peptide] + formate. Its function is as follows. Removes the formyl group from the N-terminal Met of newly synthesized proteins. Requires at least a dipeptide for an efficient rate of reaction. N-terminal L-methionine is a prerequisite for activity but the enzyme has broad specificity at other positions. In Thermotoga neapolitana (strain ATCC 49049 / DSM 4359 / NBRC 107923 / NS-E), this protein is Peptide deformylase.